Reading from the N-terminus, the 191-residue chain is Vascular endothelial growth factor A (191 aa).

A signal peptide spans M1 to A26. Cystine bridges form between C52/C94, C83/C128, and C87/C130. N-linked (GlcNAc...) asparagine glycosylation is present at N101.

The protein belongs to the PDGF/VEGF growth factor family. In terms of assembly, homodimer; disulfide-linked. Also found as heterodimer with PGF. In terms of tissue distribution, expressed by the venom gland, and probably other tissues.

The protein localises to the secreted. Its function is as follows. Growth factor active in angiogenesis, vasculogenesis and endothelial cell growth. Induces endothelial cell proliferation, promotes cell migration, inhibits apoptosis and induces permeabilization of blood vessels. Binds to heparan sulfate and heparin. The protein is Vascular endothelial growth factor A of Bitis gabonica (Gaboon adder).